A 65-amino-acid chain; its full sequence is Metallothionein-B (65 aa).

This sequence belongs to the metallothionein superfamily. Type 4 family.

In terms of biological role, metallothioneins have a high content of cysteine residues that bind various heavy metals. The chain is Metallothionein-B (MTB1) from Strongylocentrotus purpuratus (Purple sea urchin).